Consider the following 175-residue polypeptide: uncharacterized protein (175 aa).

This is an uncharacterized protein from Mycobacterium tuberculosis (strain ATCC 25618 / H37Rv).